Reading from the N-terminus, the 460-residue chain is Gastric inhibitory polypeptide receptor (460 aa).

A signal peptide spans 1–18; that stretch reads MPLRLLLLLLWLWGLQWA. Topologically, residues 19 to 134 are extracellular; that stretch reads ETDSEGQTTT…DQTLILERLQ (116 aa). 3 cysteine pairs are disulfide-bonded: Cys42–Cys66, Cys57–Cys99, and Cys80–Cys114. N-linked (GlcNAc...) asparagine glycosylation is found at Asn58, Asn68, and Asn73. A helical membrane pass occupies residues 135 to 155; it reads IMYTVGYSLSLTTLLLALLIL. Residues 156-166 lie on the Cytoplasmic side of the membrane; sequence SLFRRLHCTRN. A helical membrane pass occupies residues 167–185; it reads YIHMNLFTSFMLRAAAILT. Over 186–222 the chain is Extracellular; sequence RDQLLPPLGPYTGDQAPTPWNQALAACRTAQIMTQYC. Residues 223–243 traverse the membrane as a helical segment; that stretch reads VGANYTWLLVEGVYLHHLLVI. The Cytoplasmic portion of the chain corresponds to 244–255; the sequence is VGRSEKGHFRCY. A helical membrane pass occupies residues 256–276; that stretch reads LLLGWGAPALFVIPWVIVRYL. At 277-297 the chain is on the extracellular side; that stretch reads RENTQCWERNEVKAIWWIIRT. Residues 298–318 form a helical membrane-spanning segment; sequence PILITILINFLIFIRILGILV. At 319–337 the chain is on the cytoplasmic side; that stretch reads SKLRTRQMRCPDYRLRLAR. The chain crosses the membrane as a helical span at residues 338–358; the sequence is STLTLVPLLGVHEVVFAPVTE. The Extracellular segment spans residues 359 to 370; sequence EQVEGSLRFAKL. Residues 371 to 391 traverse the membrane as a helical segment; the sequence is AFEIFLSSFQGFLVSVLYCFI. Residues 392 to 460 are Cytoplasmic-facing; sequence NKEVQSEIRQ…PGDEVLESYC (69 aa).

It belongs to the G-protein coupled receptor 2 family. May form homodimers and heterodimers with GLP1R. Post-translationally, N-glycosylation is required for cell surface expression and lengthens receptor half-life by preventing degradation in the ER.

Its subcellular location is the cell membrane. Its function is as follows. This is a receptor for GIP. The activity of this receptor is mediated by G proteins which activate adenylyl cyclase. This is Gastric inhibitory polypeptide receptor (Gipr) from Mus musculus (Mouse).